Here is an 886-residue protein sequence, read N- to C-terminus: Vam6/Vps39-like protein (886 aa).

The 280-residue stretch at 15–294 (PLQIDCLAAW…RFITSGGSNI (280 aa)) folds into the CNH domain. One copy of the CHCR repeat lies at 573 to 750 (FTEDLPEVES…LLRMYLSPPS (178 aa)).

The protein belongs to the VAM6/VPS39 family. As to quaternary structure, homooligomer. Interacts with TGFBR2 and, less efficiently, with TGFBR1; interaction with TGFBR2 is independent of the receptor kinase activity and of the presence of TGF-beta. Also interacts with ACVR2B, but not with BMPR2. Interacts with SMAD4, preferentially following TGF-beta treatment. Component of the putative homotypic fusion and vacuole protein sorting (HOPS) complex; the core of which composed of the class C Vps proteins VPS11, VPS16, VPS18 and VPS33A, is associated with VPS39 and VPS41. Interacts with PLEKHM2; involved in VPS39 recruitment to ARL8B-containing lysosomes. Associates with adapter protein complex 3 (AP-3) and clathrin:AP-3 complexes. Interacts with STX17; this interaction is increased in the absence of TMEM39A. Interacts with RAB7, RAB2A and RAB2B. Interacts with RAB2A (GTP-bound); the interaction contributes to obtaining a functional HOPS complex that promotes autophagosome-lysosome membrane fusion driven by STX17-SNAP29-VAMP8. Interacts with RAB39A (GTP-bound) and RAB39B (GTP-bound); interaction with RAB39A contributes to obtaining a functional HOPS complex.

It is found in the cytoplasm. The protein localises to the lysosome membrane. The protein resides in the late endosome membrane. Regulator of TGF-beta/activin signaling, inhibiting SMAD3- and activating SMAD2-dependent transcription. Acts by interfering with SMAD3/SMAD4 complex formation, this would lead to inhibition of SMAD3-dependent transcription and relieve SMAD3 inhibition of SMAD2-dependent promoters, thus increasing SMAD2-dependent transcription. Its function is as follows. Plays a role in vesicle-mediated protein trafficking to lysosomal compartments including the endocytic membrane transport and autophagic pathways. Acts as a component of the HOPS endosomal tethering complex which is proposed to be involved in the Rab5-to-Rab7 endosome conversion probably implicating MON1A/B, and via binding SNAREs and SNARE complexes to mediate tethering and docking events during SNARE-mediated membrane fusion. The HOPS complex is proposed to be recruited to Rab7 on the late endosomal membrane and to regulate late endocytic, phagocytic and autophagic traffic towards lysosomes. Involved in homotypic vesicle fusions between late endosomes and in heterotypic fusions between late endosomes and lysosomes. Required for fusion of endosomes and autophagosomes with lysosomes. This chain is Vam6/Vps39-like protein, found in Mus musculus (Mouse).